Here is a 515-residue protein sequence, read N- to C-terminus: Gamma aminobutyrate transaminase 1, mitochondrial (515 aa).

A mitochondrion-targeting transit peptide spans 1–57; that stretch reads MAKISRLFGSTVKAAITAQAGFHGKRIPAVSSLQEHIVKSTPARYNSTQACLENDIS. Residue 172–173 participates in pyridoxal 5'-phosphate binding; it reads GS. Substrate is bound at residue Y205. A pyridoxal 5'-phosphate-binding site is contributed by D312. Substrate is bound at residue K341. K341 is modified (N6-(pyridoxal phosphate)lysine).

The protein belongs to the class-III pyridoxal-phosphate-dependent aminotransferase family. As to expression, expressed in leaves, roots, stems, flowers and fruits.

The protein localises to the mitochondrion. It carries out the reaction 4-aminobutanoate + pyruvate = succinate semialdehyde + L-alanine. The catalysed reaction is 4-aminobutanoate + glyoxylate = succinate semialdehyde + glycine. Functionally, transaminase that degrades gamma-amino butyric acid (GABA) and uses pyruvate or glyoxylate as amino-group acceptor. Cannot use beta-alanine, ornithine, acetylornithine, serine, glycine, asparagine, glutamine, glutamate, valine, leucine, isoleucine, methionine, phenylalanine, histidine, lysine, arginine, aspartate, threonine, tyrosine, tryptophan, proline, or cysteine as amino donors. Acts predominantly in vegetative tissues. The sequence is that of Gamma aminobutyrate transaminase 1, mitochondrial (GABA-TP1) from Solanum lycopersicum (Tomato).